Reading from the N-terminus, the 115-residue chain is Kunitz-type trypsin inhibitor 1 (115 aa).

Belongs to the protease inhibitor I3 (leguminous Kunitz-type inhibitor) family.

Functionally, exhibits Kunitz trypsin protease inhibitor activity. This chain is Kunitz-type trypsin inhibitor 1, found in Selenicereus undatus (Pitahaya).